The following is a 140-amino-acid chain: Sex-regulated protein janus-B (140 aa).

Arginine 42 serves as a coordination point for substrate. Histidine 69 functions as the Proton acceptor in the catalytic mechanism. A substrate-binding site is contributed by 110–112 (SRT).

Belongs to the janus family.

In terms of biological role, janA and janB regulate somatic sex differentiation. This chain is Sex-regulated protein janus-B (janB), found in Drosophila yakuba (Fruit fly).